Consider the following 576-residue polypeptide: Cilia- and flagella-associated protein 100 (576 aa).

The interval 1 to 29 is disordered; that stretch reads MPIYDEASVPGTAAGRSTTDVGATAGANP. 3 coiled-coil regions span residues 125-226, 254-311, and 342-408; these read IFLL…CRRY, VAEW…IMKE, and YKQL…LKDR. Disordered regions lie at residues 417 to 439, 495 to 519, and 538 to 563; these read TLSM…PGGP, AEKA…HREH, and TGKP…RNDE.

It belongs to the CFAP100 family. As to quaternary structure, interacts with FAP73; form the modifier of inner arm (MIA) complex.

It is found in the cytoplasm. The protein resides in the cytoskeleton. The protein localises to the flagellum axoneme. In terms of biological role, as part of MIA, a complex associated with the outer doublet microtubules of the axoneme, may play a role in ciliary/flagellar motility by regulating the assembly and the activity of axonemal inner dynein arm. This Chlamydomonas reinhardtii (Chlamydomonas smithii) protein is Cilia- and flagella-associated protein 100.